A 352-amino-acid chain; its full sequence is MRGNRLVEFPDDFWIPIPLDTNNVTALSPFLVPQDHLGSPTIFYSMSALMFVLFVAGTAINLLTIACTLQYKKLRSHLNYILVNMAVANLIVASTGSSTCFVCFAFKYMVLGPLGCKIEGFTAALGGMVSLWSLAVIAFERWLVICKPLGNFVFKSEHALLCCALTWVCGLCASVPPLVGWSRYIPEGMQCSCGPDWYTTGNKFNNESFVMFLFCFCFAVPFSIIVFCYSQLLFTLKMAAKAQADSASTQKAEKEVTRMVVVMVVAFLVCYVPYASFALWVINNRGQTFDLRLATIPSCVSKASTVYNPVIYVLLNKQFRLCMKKMLGMSADEDEESSTSQSTTEVSKVGPS.

Residues 1–42 (MRGNRLVEFPDDFWIPIPLDTNNVTALSPFLVPQDHLGSPTI) lie on the Extracellular side of the membrane. Residue Asn-23 is glycosylated (N-linked (GlcNAc...) asparagine). The helical transmembrane segment at 43–67 (FYSMSALMFVLFVAGTAINLLTIAC) threads the bilayer. Residues 68–79 (TLQYKKLRSHLN) lie on the Cytoplasmic side of the membrane. Residues 80–105 (YILVNMAVANLIVASTGSSTCFVCFA) traverse the membrane as a helical segment. Topologically, residues 106 to 119 (FKYMVLGPLGCKIE) are extracellular. The cysteines at positions 116 and 193 are disulfide-linked. The helical transmembrane segment at 120-139 (GFTAALGGMVSLWSLAVIAF) threads the bilayer. Residues 140 to 158 (ERWLVICKPLGNFVFKSEH) lie on the Cytoplasmic side of the membrane. A helical membrane pass occupies residues 159 to 182 (ALLCCALTWVCGLCASVPPLVGWS). Residues 183-208 (RYIPEGMQCSCGPDWYTTGNKFNNES) are Extracellular-facing. Asn-206 is a glycosylation site (N-linked (GlcNAc...) asparagine). The chain crosses the membrane as a helical span at residues 209–236 (FVMFLFCFCFAVPFSIIVFCYSQLLFTL). The Cytoplasmic segment spans residues 237–258 (KMAAKAQADSASTQKAEKEVTR). The chain crosses the membrane as a helical span at residues 259–282 (MVVVMVVAFLVCYVPYASFALWVI). The Extracellular portion of the chain corresponds to 283 to 290 (NNRGQTFD). The helical transmembrane segment at 291-315 (LRLATIPSCVSKASTVYNPVIYVLL) threads the bilayer. An N6-(retinylidene)lysine modification is found at Lys-302. The Cytoplasmic portion of the chain corresponds to 316-352 (NKQFRLCMKKMLGMSADEDEESSTSQSTTEVSKVGPS). Positions 332–352 (DEDEESSTSQSTTEVSKVGPS) are disordered.

This sequence belongs to the G-protein coupled receptor 1 family. Opsin subfamily. Post-translationally, phosphorylated on some or all of the serine and threonine residues present in the C-terminal region. The color pigments are found in the cone photoreceptor cells.

Its subcellular location is the membrane. Visual pigments are the light-absorbing molecules that mediate vision. They consist of an apoprotein, opsin, covalently linked to cis-retinal. The chain is Blue-sensitive opsin from Oryzias latipes (Japanese rice fish).